A 254-amino-acid chain; its full sequence is Phosphoribosylaminoimidazole-succinocarboxamide synthase (254 aa).

This sequence belongs to the SAICAR synthetase family.

The enzyme catalyses 5-amino-1-(5-phospho-D-ribosyl)imidazole-4-carboxylate + L-aspartate + ATP = (2S)-2-[5-amino-1-(5-phospho-beta-D-ribosyl)imidazole-4-carboxamido]succinate + ADP + phosphate + 2 H(+). Its pathway is purine metabolism; IMP biosynthesis via de novo pathway; 5-amino-1-(5-phospho-D-ribosyl)imidazole-4-carboxamide from 5-amino-1-(5-phospho-D-ribosyl)imidazole-4-carboxylate: step 1/2. This Brucella abortus (strain S19) protein is Phosphoribosylaminoimidazole-succinocarboxamide synthase.